The chain runs to 699 residues: Elongation factor G (699 aa).

Residues 8-283 (EHIRNIGICA…AVVDFLPSPI (276 aa)) enclose the tr-type G domain. Residues 17 to 24 (AHIDAGKT), 81 to 85 (DTPGH), and 135 to 138 (NKMD) contribute to the GTP site.

Belongs to the TRAFAC class translation factor GTPase superfamily. Classic translation factor GTPase family. EF-G/EF-2 subfamily.

Its subcellular location is the cytoplasm. Its function is as follows. Catalyzes the GTP-dependent ribosomal translocation step during translation elongation. During this step, the ribosome changes from the pre-translocational (PRE) to the post-translocational (POST) state as the newly formed A-site-bound peptidyl-tRNA and P-site-bound deacylated tRNA move to the P and E sites, respectively. Catalyzes the coordinated movement of the two tRNA molecules, the mRNA and conformational changes in the ribosome. This Rickettsia peacockii (strain Rustic) protein is Elongation factor G.